A 654-amino-acid chain; its full sequence is Interferon-induced GTP-binding protein Mx1 (654 aa).

Met-1 is subject to N-acetylmethionine. Basic and acidic residues-rich tracts occupy residues 1–12 (MVLSDLDIKEPD) and 23–32 (DMVREHETES). Residues 1–33 (MVLSDLDIKEPDSPESGLNGSDDMVREHETESK) are disordered. Residues 62-335 (DLALPAIAVI…LIMHICKTLP (274 aa)) form the Dynamin-type G domain. Residues 72–79 (GDQSSGKS) are G1 motif. Residue 72–79 (GDQSSGKS) coordinates GTP. Residues 97-99 (VTR) are G2 motif. Residues 173–176 (DLPG) form a G3 motif region. Residues 173–177 (DLPGI) and 242–245 (TKPD) each bind GTP. Residues 242 to 245 (TKPD) are G4 motif. The tract at residues 274–277 (KCRG) is G5 motif. The segment at 336–361 (LLENQIKETHQRITEELQKYGKDIPE) is bundle signaling element (BSE). The tract at residues 361–528 (EEESEKMFSL…HFQMEQLVYC (168 aa)) is middle domain. Residues 362–624 (EESEKMFSLI…KDQYDWLLKE (263 aa)) form a stalk region. The disordered stretch occupies residues 544–563 (EAEEEKKKKSNHYYQSEDSE). The tract at residues 549-552 (KKKK) is critical for lipid-binding. The GED domain maps to 566–654 (TAEIFQHLMA…ARQRLAKFPG (89 aa)).

It belongs to the TRAFAC class dynamin-like GTPase superfamily. Dynamin/Fzo/YdjA family. As to quaternary structure, homooligomer. Oligomerizes into multimeric filamentous or ring-like structures by virtue of its stalk domain. Oligomerization is critical for GTPase activity, protein stability, and recognition of viral target structures. Interacts with TRPC1, TRPC3, TRPC4, TRPC5, TRPC6 and TRPC7. Interacts with HSPA5. Interacts with DDX39A and DDX39B. Interacts with TUBB/TUBB5. Post-translationally, ISGylated.

It localises to the cytoplasm. Its subcellular location is the endoplasmic reticulum membrane. It is found in the perinuclear region. In terms of biological role, interferon-induced dynamin-like GTPase with antiviral activity. This chain is Interferon-induced GTP-binding protein Mx1 (MX1), found in Ovis aries (Sheep).